Reading from the N-terminus, the 204-residue chain is Synaptosomal-associated protein 25-A (204 aa).

Basic and acidic residues predominate over residues 1 to 11; sequence MAEDSDMRNEL. Positions 1-25 are disordered; that stretch reads MAEDSDMRNELADMQQRADQLADES. T-SNARE coiled-coil homology domains follow at residues 19–81 and 138–200; these read DQLA…LNDL and DARE…ATKM.

Belongs to the SNAP-25 family. As to expression, expressed in several regions throughout the adult brain, including the mesencephalon.

It is found in the synapse. The protein localises to the synaptosome. The protein resides in the cell membrane. May play an important role in the synaptic function of specific neuronal systems. Associates with proteins involved in vesicle docking and membrane fusion. The chain is Synaptosomal-associated protein 25-A from Danio rerio (Zebrafish).